The primary structure comprises 218 residues: UPF0177 protein YaiF (218 aa).

Transmembrane regions (helical) follow at residues S8–L28, F48–F68, I81–F101, I123–L143, and F163–G183.

Belongs to the UPF0177 family.

It localises to the cell membrane. In Lactococcus lactis subsp. lactis (strain IL1403) (Streptococcus lactis), this protein is UPF0177 protein YaiF (yaiF).